The sequence spans 285 residues: Pseudouridine-5'-phosphate glycosidase (285 aa).

The active-site Proton donor is the E17. K77 and V97 together coordinate substrate. D126 contacts Mn(2+). A substrate-binding site is contributed by 128 to 130 (SQD). The active-site Nucleophile is K147.

It belongs to the pseudouridine-5'-phosphate glycosidase family. As to quaternary structure, homotrimer. Mn(2+) is required as a cofactor.

It carries out the reaction D-ribose 5-phosphate + uracil = psi-UMP + H2O. Catalyzes the reversible cleavage of pseudouridine 5'-phosphate (PsiMP) to ribose 5-phosphate and uracil. Functions biologically in the cleavage direction, as part of a pseudouridine degradation pathway. The protein is Pseudouridine-5'-phosphate glycosidase of Thermotoga sp. (strain RQ2).